The primary structure comprises 832 residues: Protein P (832 aa).

The segment at 1–177 (MPLSYQHFRK…FCGSPYSWEQ (177 aa)) is terminal protein domain (TP). Residues 178–335 (ELQHGAESFH…YCLSHLVSLL (158 aa)) form a spacer region. The interval 336–679 (DDWGPCTEHG…YSTLYPVARQ (344 aa)) is polymerase/reverse transcriptase domain (RT). The Reverse transcriptase domain occupies 346-589 (EHHIRIPRTP…YSLHFMGYVI (244 aa)). Residues aspartate 418, aspartate 540, and aspartate 541 each coordinate Mg(2+).

It belongs to the hepadnaviridae P protein family.

The catalysed reaction is DNA(n) + a 2'-deoxyribonucleoside 5'-triphosphate = DNA(n+1) + diphosphate. It catalyses the reaction Endonucleolytic cleavage to 5'-phosphomonoester.. Activated by host HSP70 and HSP40 in vitro to be able to bind the epsilon loop of the pgRNA. Because deletion of the RNase H region renders the protein partly chaperone-independent, the chaperones may be needed indirectly to relieve occlusion of the RNA-binding site by this domain. Inhibited by several reverse-transcriptase inhibitors: Lamivudine, Adefovir and Entecavir. Its function is as follows. Multifunctional enzyme that converts the viral RNA genome into dsDNA in viral cytoplasmic capsids. This enzyme displays a DNA polymerase activity that can copy either DNA or RNA templates, and a ribonuclease H (RNase H) activity that cleaves the RNA strand of RNA-DNA heteroduplexes in a partially processive 3'- to 5'-endonucleasic mode. Neo-synthesized pregenomic RNA (pgRNA) are encapsidated together with the P protein, and reverse-transcribed inside the nucleocapsid. Initiation of reverse-transcription occurs first by binding the epsilon loop on the pgRNA genome, and is initiated by protein priming, thereby the 5'-end of (-)DNA is covalently linked to P protein. Partial (+)DNA is synthesized from the (-)DNA template and generates the relaxed circular DNA (RC-DNA) genome. After budding and infection, the RC-DNA migrates in the nucleus, and is converted into a plasmid-like covalently closed circular DNA (cccDNA). The activity of P protein does not seem to be necessary for cccDNA generation, and is presumably released from (+)DNA by host nuclear DNA repair machinery. The protein is Protein P of Pan troglodytes (Chimpanzee).